An 807-amino-acid polypeptide reads, in one-letter code: Glycerol-3-phosphate acyltransferase (807 aa).

The HXXXXD motif signature appears at 308-313 (CHRSHM).

Belongs to the GPAT/DAPAT family.

The protein localises to the cell inner membrane. It catalyses the reaction sn-glycerol 3-phosphate + an acyl-CoA = a 1-acyl-sn-glycero-3-phosphate + CoA. Its pathway is phospholipid metabolism; CDP-diacylglycerol biosynthesis; CDP-diacylglycerol from sn-glycerol 3-phosphate: step 1/3. This is Glycerol-3-phosphate acyltransferase from Shewanella denitrificans (strain OS217 / ATCC BAA-1090 / DSM 15013).